We begin with the raw amino-acid sequence, 228 residues long: Cytokinin riboside 5'-monophosphate phosphoribohydrolase LOG5 (228 aa).

Residues Glu79, 97–98 (RK), and 114–120 (GYGTLEE) contribute to the substrate site.

Belongs to the LOG family. In terms of tissue distribution, expressed in roots and shoots. Detected in vascular tissues of roots, cotyledons, and leaves, axillary buds, immature and mature flowers, fruit abscission zones and ovules.

The protein localises to the cytoplasm. The protein resides in the nucleus. It carries out the reaction N(6)-(dimethylallyl)adenosine 5'-phosphate + H2O = N(6)-dimethylallyladenine + D-ribose 5-phosphate. It catalyses the reaction 9-ribosyl-trans-zeatin 5'-phosphate + H2O = trans-zeatin + D-ribose 5-phosphate. In terms of biological role, cytokinin-activating enzyme working in the direct activation pathway. Phosphoribohydrolase that converts inactive cytokinin nucleotides to the biologically active free-base forms. This is Cytokinin riboside 5'-monophosphate phosphoribohydrolase LOG5 (LOG5) from Arabidopsis thaliana (Mouse-ear cress).